The primary structure comprises 1701 residues: Merozoite surface protein 1 (1701 aa).

A signal peptide spans 1–19; that stretch reads MKIIFFLCSFLFFIINTQC. The segment covering 89–100 has biased composition (gly residues); sequence GSGGSVASGGSG. Residues 89–118 are disordered; that stretch reads GSGGSVASGGSGNSRRTNPSDNSSDSNTKT. The segment covering 101–116 has biased composition (low complexity); the sequence is NSRRTNPSDNSSDSNT. Asn-110 and Asn-239 each carry an N-linked (GlcNAc...) asparagine glycan. Residues 322 to 344 are disordered; it reads DAENPTTGSKPNPLPENKKKEVE. 3 N-linked (GlcNAc...) asparagine glycosylation sites follow: Asn-470, Asn-536, and Asn-607. The tract at residues 704–739 is disordered; that stretch reads SETTEDGGHSTHTLSQSGETEVTEETEVTEETVGHT. Residues 724–733 are compositionally biased toward acidic residues; it reads EVTEETEVTE. N-linked (GlcNAc...) asparagine glycosylation is found at Asn-802, Asn-899, Asn-919, Asn-965, Asn-991, Asn-1089, and Asn-1196. The segment covering 889 to 927 has biased composition (low complexity); that stretch reads TGTSSTSSPGNTTVNTAQSATHSNSQNQQSNASSTNTQN. A disordered region spans residues 889–936; the sequence is TGTSSTSSPGNTTVNTAQSATHSNSQNQQSNASSTNTQNGVAVSSGPA. Disordered regions lie at residues 1230–1259 and 1451–1472; these read TPPQPDVTPSPLSVRVSGSSGSTKEETQIP and KEKFPSSPPTTPPSPAKTDEQK. Positions 1245–1259 are enriched in polar residues; it reads VSGSSGSTKEETQIP. A compositionally biased stretch (pro residues) spans 1456–1465; that stretch reads SSPPTTPPSP. Asn-1588 carries N-linked (GlcNAc...) asparagine glycosylation. EGF-like domains are found at residues 1592-1632 and 1633-1680; these read HQCV…VENP and NPTC…IFCS. Intrachain disulfides connect Cys-1594–Cys-1605, Cys-1599–Cys-1615, Cys-1617–Cys-1628, Cys-1636–Cys-1649, Cys-1643–Cys-1663, and Cys-1665–Cys-1679. Ser-1680 is lipidated: GPI-anchor amidated serine. Residues 1681 to 1701 constitute a propeptide, removed in mature form; that stretch reads SSNFLGISFLLILMLILYSFI.

In terms of assembly, forms a complex composed of subunits p83, p30, p38, and p42 which remain non-covalently associated; the complex is formed at the merozoite surface prior to egress from host erythrocytes. Forms a complex composed of processed MSP1 subunits, MSP6 subunit p36 and MSP7; the complex is formed at the merozoite surface prior to egress from host erythrocytes. Within the complex, interacts (via subunit p38) with MSP6 subunit p36 and (via subunits p83, p30 and p38) with MSP7 (via subunit p22). Forms a complex composed of MSP1, MSP6, DBLMSP1 and DBLMSP2. Within the complex, interacts (via subunit p38) with DBLMSP1 and DBLMSP2. Forms a complex composed of MSP1, and rhoptry proteins RhopH3, RAP1 and CLAG9/RhopH3. Within the complex, interacts (via subunits p42 and p19) with RhopH3 (via C-terminus). Forms a complex composed of MSP1, MSP6, MSP7, MSP9 and MSP3; within the complex, MSP6 and MSP9 mediate the binding to the host erythrocyte. Interacts (via subunits p19 and p42) with MSP9; the interaction is direct; MSP1 subunits p19 or p42, and MSP9 form a co-ligand complex that interacts with host SLC4A1/Band 3 protein. May interact with PFD6. Interacts with host spectrin. Interacts with host glycophorin GYPA in a sialic acid-independent manner. As to quaternary structure, interacts with host proinflammatory cytokine S100P; the interaction blocks S100P inflammatory and chemotactic activities. In terms of assembly, interacts with host SLC4A1/Band 3 (via 5ABC region) on the host erythrocyte surface in a sialic acid-independent manner. Post-translationally, the p190 precursor is cleaved by SUB1 prior to merozoite egress into 4 subunits p83, p30, p38, and p42 which remain non-covalently associated. SUB1-mediated proteolytic cleavage occurs in an orderly manner; the first cleavage occurs at the p30/p38 site, followed by cleavage at the p83/p30 site, the last cleavage occurs at the p38/p42 site. The order of cleavage is essential for parasite viability. SUB1-mediated processing is essential for merozoite egress. In a second processing step during erythrocyte invasion, p42 is cleaved by SUB2 into p33 and p19; the latter remains attached to the merozoite surface via its GPI-anchor and is endocytosed during the subsequent ring stage.

It localises to the cell membrane. The protein localises to the secreted. The protein resides in the vacuole membrane. In terms of biological role, during the asexual blood stage, involved in merozoite egress from host erythrocytes possibly via its interaction with the host cytoskeleton protein spectrin resulting in the destabilization of the host cytoskeleton and thus leading to erythrocyte cell membrane rupture. Involved in the binding to host erythrocytes and is required for host erythrocyte invasion. By binding to host proinflammatory cytokine S100P may interfere with host immune responses. Functionally, involved in merozoite invasion of host erythrocytes. May play a role in the biogenesis and/or function of the food vacuole during the intraerythrocytic development. The chain is Merozoite surface protein 1 from Plasmodium falciparum (isolate mad20 / Papua New Guinea).